Here is a 912-residue protein sequence, read N- to C-terminus: LPS-assembly protein LptD (912 aa).

The first 27 residues, 1–27, serve as a signal peptide directing secretion; sequence MLYSPLYQSIRLILFGALGLSSLTVSA.

It belongs to the LptD family. Component of the lipopolysaccharide transport and assembly complex. Interacts with LptE and LptA.

It localises to the cell outer membrane. Its function is as follows. Together with LptE, is involved in the assembly of lipopolysaccharide (LPS) at the surface of the outer membrane. The chain is LPS-assembly protein LptD from Psychrobacter arcticus (strain DSM 17307 / VKM B-2377 / 273-4).